We begin with the raw amino-acid sequence, 310 residues long: Malate dehydrogenase (310 aa).

NAD(+)-binding positions include 7 to 12 (GAGNVG) and D32. R81 and R87 together coordinate substrate. Residues N94 and 117-119 (VSN) each bind NAD(+). Substrate-binding residues include N119 and R150. Residue H174 is the Proton acceptor of the active site.

Belongs to the LDH/MDH superfamily. MDH type 3 family.

The catalysed reaction is (S)-malate + NAD(+) = oxaloacetate + NADH + H(+). Its function is as follows. Catalyzes the reversible oxidation of malate to oxaloacetate. The sequence is that of Malate dehydrogenase from Pelodictyon phaeoclathratiforme (strain DSM 5477 / BU-1).